A 249-amino-acid polypeptide reads, in one-letter code: Eukaryotic translation initiation factor 3 subunit K (249 aa).

Residues 46–222 (FDCYANLALL…VKVPSNKENE (177 aa)) enclose the PCI domain.

This sequence belongs to the eIF-3 subunit K family. Component of the eukaryotic translation initiation factor 3 (eIF-3) complex.

The protein resides in the cytoplasm. In terms of biological role, component of the eukaryotic translation initiation factor 3 (eIF-3) complex, which is involved in protein synthesis of a specialized repertoire of mRNAs and, together with other initiation factors, stimulates binding of mRNA and methionyl-tRNAi to the 40S ribosome. The eIF-3 complex specifically targets and initiates translation of a subset of mRNAs involved in cell proliferation. This is Eukaryotic translation initiation factor 3 subunit K from Aspergillus clavatus (strain ATCC 1007 / CBS 513.65 / DSM 816 / NCTC 3887 / NRRL 1 / QM 1276 / 107).